We begin with the raw amino-acid sequence, 431 residues long: Levansucrase Lscbeta (431 aa).

Sucrose is bound by residues W61, D62, A148, R218, and D219. D62 functions as the Nucleophile in the catalytic mechanism. E303 serves as the catalytic Proton donor/acceptor.

The protein belongs to the glycosyl hydrolase 68 family. In terms of assembly, homodimer.

The catalysed reaction is [6)-beta-D-fructofuranosyl-(2-&gt;](n) alpha-D-glucopyranoside + sucrose = [6)-beta-D-fructofuranosyl-(2-&gt;](n+1) alpha-D-glucopyranoside + D-glucose. With respect to regulation, sucrose hydrolase activity is negatively affected by salt concentration. The levan polymerization rate is constant regardless of sucrose concentration. Catalyzes the synthesis of levan, a fructose polymer, by transferring the fructosyl moiety from sucrose to a growing acceptor molecule. Also displays sucrose hydrolase activity. The chain is Levansucrase Lscbeta from Pseudomonas syringae pv. actinidiae.